A 79-amino-acid polypeptide reads, in one-letter code: Acyl carrier protein (79 aa).

Residues 2–79 (ASKEEILAGL…QDAVDFIXGA (78 aa)) form the Carrier domain. Residue serine 40 is modified to O-(pantetheine 4'-phosphoryl)serine.

This sequence belongs to the acyl carrier protein (ACP) family. Post-translationally, 4'-phosphopantetheine is transferred from CoA to a specific serine of apo-ACP by AcpS. This modification is essential for activity because fatty acids are bound in thioester linkage to the sulfhydryl of the prosthetic group.

The protein localises to the cytoplasm. It participates in lipid metabolism; fatty acid biosynthesis. Its function is as follows. Carrier of the growing fatty acid chain in fatty acid biosynthesis. In Myxococcus xanthus, this protein is Acyl carrier protein.